We begin with the raw amino-acid sequence, 64 residues long: Large ribosomal subunit protein bL35 (64 aa).

Over residues Met1–Lys14 the composition is skewed to basic residues. A disordered region spans residues Met1–Asp48. The span at Leu21–Pro36 shows a compositional bias: basic and acidic residues.

This sequence belongs to the bacterial ribosomal protein bL35 family.

The protein is Large ribosomal subunit protein bL35 of Corynebacterium aurimucosum (strain ATCC 700975 / DSM 44827 / CIP 107346 / CN-1) (Corynebacterium nigricans).